Here is a 176-residue protein sequence, read N- to C-terminus: Peptidyl-prolyl cis-trans isomerase cyp5 (176 aa).

The region spanning 10-173 (FFDVAVNGKP…AKVEIVDCGE (164 aa)) is the PPIase cyclophilin-type domain.

The protein belongs to the cyclophilin-type PPIase family.

It carries out the reaction [protein]-peptidylproline (omega=180) = [protein]-peptidylproline (omega=0). Functionally, PPIases accelerate the folding of proteins. It catalyzes the cis-trans isomerization of proline imidic peptide bonds in oligopeptides. In Rhizopus delemar (strain RA 99-880 / ATCC MYA-4621 / FGSC 9543 / NRRL 43880) (Mucormycosis agent), this protein is Peptidyl-prolyl cis-trans isomerase cyp5 (cyp5).